A 94-amino-acid polypeptide reads, in one-letter code: DASH complex subunit DAD5 (94 aa).

Residues 1–20 (MRRSTIVPTSRTSSSSPSPS) are compositionally biased toward low complexity. The interval 1 to 25 (MRRSTIVPTSRTSSSSPSPSQMKSF) is disordered.

This sequence belongs to the DASH complex HSK3 family. As to quaternary structure, component of the DASH complex consisting of ask1, dad1, dad2, dad3, dad4, dam1, duo1, dad5, spc19 and spc34, with a stoichiometry of one copy of each subunit per complex. Multiple DASH complexes oligomerize to form a ring that encircles spindle microtubules and organizes the rod-like NDC80 complexes of the outer kinetochore. DASH complex oligomerization strengthens microtubule attachments. On cytoplasmic microtubules, DASH complexes appear to form patches instead of rings.

The protein localises to the nucleus. Its subcellular location is the cytoplasm. It is found in the cytoskeleton. The protein resides in the spindle. It localises to the chromosome. The protein localises to the centromere. Its subcellular location is the kinetochore. Functionally, component of the DASH complex that connects microtubules with kinetochores and couples microtubule depolymerisation to chromosome movement; it is involved in retrieving kinetochores to the spindle poles before their re-orientation on the spindle in early mitosis and allows microtubule depolymerization to pull chromosomes apart and resist detachment during anaphase. Kinetochores, consisting of a centromere-associated inner segment and a microtubule-contacting outer segment, play a crucial role in chromosome segregation by mediating the physical connection between centromeric DNA and microtubules. Kinetochores also serve as an input point for the spindle assembly checkpoint, which delays anaphase until all chromosomes have bioriented on the mitotic spindle. The DASH complex mediates bipolar kinetochore-microtubule attachments and facilitates the formation of additional interactions between outer kinetochore components and spindle microtubules. During chromosome movement along the microtubule, it is required both for the sliding of kinetochores along the lateral side of the microtubule and also for microtubule end-on pulling on the kinetochore. Modulates cytoplasmic microtubule dynamics by tracking the plus-end of shortening microtubules and slowing their depolymerization. The chain is DASH complex subunit DAD5 from Schizosaccharomyces pombe (strain 972 / ATCC 24843) (Fission yeast).